Consider the following 403-residue polypeptide: ATP phosphoribosyltransferase regulatory subunit (403 aa).

Belongs to the class-II aminoacyl-tRNA synthetase family. HisZ subfamily. In terms of assembly, heteromultimer composed of HisG and HisZ subunits.

It is found in the cytoplasm. It participates in amino-acid biosynthesis; L-histidine biosynthesis; L-histidine from 5-phospho-alpha-D-ribose 1-diphosphate: step 1/9. In terms of biological role, required for the first step of histidine biosynthesis. May allow the feedback regulation of ATP phosphoribosyltransferase activity by histidine. This chain is ATP phosphoribosyltransferase regulatory subunit, found in Crocosphaera subtropica (strain ATCC 51142 / BH68) (Cyanothece sp. (strain ATCC 51142)).